Here is a 757-residue protein sequence, read N- to C-terminus: MDVNPTLLFLKVPAQNAISTTFPYTGDPPYSHGTGTGYTMDTVNRTHQYSEKGRWTTNTETGAPQLNPIDGPLPEDNEPSGYAQTDCVLEAMAFLEESHPGIFENSCIETMEVVQQTRVDKLTQGRQTYDWTLNRNQPAATALANTIEVFRSNGLTANESGRLIDFLKDVMESMKKEEMGITTHFQRKRRVRDNMTKKMITQRTIGKKKQRLNKRSYLIRALTLNTMTKDAERGKLKRRAIATPGMQIRGFVYFVETLARSICEKLEQSGLPVGGNEKKAKLANVVRKMMTNSQDTELSFTITGDNTKWNENQNPRMFLAMITYMTRNQPEWFRNVLSIAPIMFSNKMARLGKGYMFESKSMKLRTQIPAEMLASIDLKYFNDSTRKKIEKIRPLLIEGTASLSPGMMMGMFNMLSTVLGVSILNLGQKRYTKTTYWWDGLQSSDDFALIVNAPNHEGIQAGVDRFYRTCKLLGINMSKKKSYINRTGTFEFTSFFYRYGFVANFSMELPSFGVSGINESADMSIGVTVIKNNMINNDLGPATAQMALQLFIKDYRYTYRCHRGDTQIQTRRSFEIKKLWEQTRSKAGLLVSDGGPNLYNIRNLHIPEVCLKWELMDEDYQGRLCNPLNPFVSHKEIESMNNAVMMPAHGPAKNMEYDAVATTHSWIPKRNRSILNTSQRGVLEDEQMYQRCCNLFEKFFPSSSYRRPVGISSMVEAMVSRARIDARIDFESGRIKKEEFTEIMKICSTIEELRRQK.

Residues 53–82 (GRWTTNTETGAPQLNPIDGPLPEDNEPSGY) are disordered. Residues 55–64 (WTTNTETGAP) are compositionally biased toward polar residues. 2 consecutive short sequence motifs (nuclear localization signal) follow at residues 187–195 (RKRRVRDNM) and 203–216 (RTIG…NKRS). A promoter-binding site region spans residues 249–256 (RGFVYFVE). The 198-residue stretch at 286–483 (VRKMMTNSQD…GINMSKKKSY (198 aa)) folds into the RdRp catalytic domain. The segment at 493–757 (TSFFYRYGFV…STIEELRRQK (265 aa)) is required for interaction with human PKP2.

This sequence belongs to the influenza viruses polymerase PB1 family. Influenza RNA polymerase is composed of three subunits: PB1, PB2 and PA. Interacts (via N-terminus) with PA (via C-terminus). Interacts (via C-terminus) with PB2 (via N-terminus); this interaction is essential for transcription initiation. Interacts (via C-terminus) with human PKP2 (via N-terminus); the interaction competitively inhibits the interaction between the RNA polymerase subunits PB1 and PB2. In terms of processing, phosphorylated by host PRKCA.

It is found in the host nucleus. The protein resides in the host cytoplasm. It catalyses the reaction RNA(n) + a ribonucleoside 5'-triphosphate = RNA(n+1) + diphosphate. Its function is as follows. RNA-dependent RNA polymerase which is responsible for replication and transcription of virus RNA segments. The transcription of viral mRNAs occurs by a unique mechanism called cap-snatching. 5' methylated caps of cellular mRNAs are cleaved after 10-13 nucleotides by PA. In turn, these short capped RNAs are used as primers by PB1 for transcription of viral mRNAs. During virus replication, PB1 initiates RNA synthesis and copy vRNA into complementary RNA (cRNA) which in turn serves as a template for the production of more vRNAs. This chain is RNA-directed RNA polymerase catalytic subunit, found in Aves (Human).